The sequence spans 64 residues: UPF0434 protein Bcep18194_A5877 (64 aa).

The protein belongs to the UPF0434 family.

This Burkholderia lata (strain ATCC 17760 / DSM 23089 / LMG 22485 / NCIMB 9086 / R18194 / 383) protein is UPF0434 protein Bcep18194_A5877.